The primary structure comprises 358 residues: tRNA-specific 2-thiouridylase MnmA (358 aa).

Residues 8-15 and Met-34 contribute to the ATP site; that span reads GLSGGVDS. The segment at 94-96 is interaction with target base in tRNA; sequence NPD. Residue Cys-99 is the Nucleophile of the active site. Cys-99 and Cys-196 are disulfide-bonded. Gly-123 lines the ATP pocket. An interaction with tRNA region spans residues 146–148; that stretch reads KDQ. The active-site Cysteine persulfide intermediate is the Cys-196. The interaction with tRNA stretch occupies residues 308-309; that stretch reads RY.

The protein belongs to the MnmA/TRMU family.

The protein resides in the cytoplasm. It catalyses the reaction S-sulfanyl-L-cysteinyl-[protein] + uridine(34) in tRNA + AH2 + ATP = 2-thiouridine(34) in tRNA + L-cysteinyl-[protein] + A + AMP + diphosphate + H(+). In terms of biological role, catalyzes the 2-thiolation of uridine at the wobble position (U34) of tRNA, leading to the formation of s(2)U34. The chain is tRNA-specific 2-thiouridylase MnmA from Thiobacillus denitrificans (strain ATCC 25259 / T1).